The chain runs to 285 residues: Single myb histone 3 (285 aa).

The disordered stretch occupies residues M1–P35. Residues M1–A60 enclose the HTH myb-type domain. A DNA-binding region (H-T-H motif) is located at residues W28–L56. The H15 domain maps to T113 to D181. Residues V226–T255 are a coiled coil.

It belongs to the histone H1/H5 family. SMH subfamily. Forms a homodimer and heterodimers.

It is found in the nucleus. The protein localises to the chromosome. Its subcellular location is the nucleolus. The protein resides in the telomere. Its function is as follows. Binds preferentially double-stranded telomeric repeats, but may also bind to the single telomeric strand. The sequence is that of Single myb histone 3 (SMH3) from Zea mays (Maize).